A 255-amino-acid polypeptide reads, in one-letter code: Small ribosomal subunit protein eS1 (255 aa).

Residue alanine 2 is modified to N-acetylalanine; partial.

It belongs to the eukaryotic ribosomal protein eS1 family. In terms of assembly, component of the small ribosomal subunit. Mature ribosomes consist of a small (40S) and a large (60S) subunit. The 40S subunit contains about 33 different proteins and 1 molecule of RNA (18S). The 60S subunit contains about 49 different proteins and 3 molecules of RNA (25S, 5.8S and 5S).

It is found in the cytoplasm. This is Small ribosomal subunit protein eS1 from Yarrowia lipolytica (strain CLIB 122 / E 150) (Yeast).